The following is a 612-amino-acid chain: MEFSRETRRLALQKMQERDLDLLIIGGGITGAGVALQAAASGLDTGLIEMQDFAQGTSSRSTKLVHGGLRYLKQFDVEVVSDTVSERAVVQQIAPHIPKPDPMLLPVYDEPGSTFSMFRLKVAMDLYDLLAGVSNTPAANKVLTKEEVLKREPDLKQEGLLGGGVYLDFRNNDARLVIENIKRANRDGALIASHVKAEDFLLDDDGKIIGVKARDLLSDQEIIIKAKLVINTTGPWSDEIRQFSHKGQPIHQMRPTKGVHLVVDRQKLPVSQPVYVDTGLNDGRMVFVLPREEKTYFGTTDTDYTGDLEHPQVTQEDVDYLLGVVNNRFPNANVTIDDIESSWAGLRPLLSGNSASDYNGGNSGKVSDDSFDHLVDTVKAYINHEDSREAVEKAIKQVETSTSEKELDPSAVSRGSSFDRDENGLFTLAGGKITDYRKMAEGALTGIIQILKEEFGKSFKLINSKTYPVSGGEINPANVDLEIEAYAQLGTLSGLSMDDARYLANLYGSNAPKVFALTRQLTAAEGLSLAETLSLHYAMDYEMALKPTDYFLRRTNHLLFMRDSLDALIDPVINEMAKHFEWSDQERVAQEDDLRRVIADNDLSALKGHQEG.

21-49 serves as a coordination point for FAD; the sequence is DLLIIGGGITGAGVALQAAASGLDTGLIE. The segment covering 398–408 has biased composition (basic and acidic residues); it reads VETSTSEKELD. Residues 398–418 form a disordered region; the sequence is VETSTSEKELDPSAVSRGSSF.

This sequence belongs to the FAD-dependent glycerol-3-phosphate dehydrogenase family. FAD is required as a cofactor.

The protein resides in the cytoplasm. It carries out the reaction sn-glycerol 3-phosphate + O2 = dihydroxyacetone phosphate + H2O2. In Streptococcus pyogenes serotype M3 (strain ATCC BAA-595 / MGAS315), this protein is Alpha-glycerophosphate oxidase (glpO).